Reading from the N-terminus, the 864-residue chain is Alanine--tRNA ligase (864 aa).

Residues histidine 553, histidine 557, cysteine 655, and histidine 659 each coordinate Zn(2+). Residues 828–847 (VGGKGGGRPDMAQAGGKDPS) form a disordered region.

The protein belongs to the class-II aminoacyl-tRNA synthetase family. Zn(2+) serves as cofactor.

It is found in the cytoplasm. The catalysed reaction is tRNA(Ala) + L-alanine + ATP = L-alanyl-tRNA(Ala) + AMP + diphosphate. Its function is as follows. Catalyzes the attachment of alanine to tRNA(Ala) in a two-step reaction: alanine is first activated by ATP to form Ala-AMP and then transferred to the acceptor end of tRNA(Ala). Also edits incorrectly charged Ser-tRNA(Ala) and Gly-tRNA(Ala) via its editing domain. This is Alanine--tRNA ligase from Hydrogenovibrio crunogenus (strain DSM 25203 / XCL-2) (Thiomicrospira crunogena).